A 362-amino-acid polypeptide reads, in one-letter code: Phosphoserine aminotransferase (362 aa).

Arg-43 provides a ligand contact to L-glutamate. Residues 77–78 (AR), Trp-103, Thr-153, Asp-173, and Gln-196 contribute to the pyridoxal 5'-phosphate site. Lys-197 bears the N6-(pyridoxal phosphate)lysine mark.

It belongs to the class-V pyridoxal-phosphate-dependent aminotransferase family. SerC subfamily. As to quaternary structure, homodimer. The cofactor is pyridoxal 5'-phosphate.

The protein resides in the cytoplasm. The catalysed reaction is O-phospho-L-serine + 2-oxoglutarate = 3-phosphooxypyruvate + L-glutamate. It catalyses the reaction 4-(phosphooxy)-L-threonine + 2-oxoglutarate = (R)-3-hydroxy-2-oxo-4-phosphooxybutanoate + L-glutamate. The protein operates within amino-acid biosynthesis; L-serine biosynthesis; L-serine from 3-phospho-D-glycerate: step 2/3. Its pathway is cofactor biosynthesis; pyridoxine 5'-phosphate biosynthesis; pyridoxine 5'-phosphate from D-erythrose 4-phosphate: step 3/5. Catalyzes the reversible conversion of 3-phosphohydroxypyruvate to phosphoserine and of 3-hydroxy-2-oxo-4-phosphonooxybutanoate to phosphohydroxythreonine. The polypeptide is Phosphoserine aminotransferase (Legionella pneumophila subsp. pneumophila (strain Philadelphia 1 / ATCC 33152 / DSM 7513)).